Consider the following 158-residue polypeptide: Regulator of sigma D (158 aa).

This sequence belongs to the Rsd/AlgQ family. Interacts with RpoD.

It is found in the cytoplasm. Its function is as follows. Binds RpoD and negatively regulates RpoD-mediated transcription activation by preventing the interaction between the primary sigma factor RpoD with the catalytic core of the RNA polymerase and with promoter DNA. May be involved in replacement of the RNA polymerase sigma subunit from RpoD to RpoS during the transition from exponential growth to the stationary phase. This chain is Regulator of sigma D, found in Escherichia fergusonii (strain ATCC 35469 / DSM 13698 / CCUG 18766 / IAM 14443 / JCM 21226 / LMG 7866 / NBRC 102419 / NCTC 12128 / CDC 0568-73).